The following is a 284-amino-acid chain: Bifunctional protein FolD (284 aa).

NADP(+)-binding positions include 166–168 (GAS) and Ile-232.

It belongs to the tetrahydrofolate dehydrogenase/cyclohydrolase family. As to quaternary structure, homodimer.

The catalysed reaction is (6R)-5,10-methylene-5,6,7,8-tetrahydrofolate + NADP(+) = (6R)-5,10-methenyltetrahydrofolate + NADPH. The enzyme catalyses (6R)-5,10-methenyltetrahydrofolate + H2O = (6R)-10-formyltetrahydrofolate + H(+). Its pathway is one-carbon metabolism; tetrahydrofolate interconversion. Catalyzes the oxidation of 5,10-methylenetetrahydrofolate to 5,10-methenyltetrahydrofolate and then the hydrolysis of 5,10-methenyltetrahydrofolate to 10-formyltetrahydrofolate. This chain is Bifunctional protein FolD, found in Shewanella baltica (strain OS223).